The following is a 664-amino-acid chain: Delta-like protein C (664 aa).

A signal peptide spans 1-20 (MARVLLTCFFILISSHLGKS). Residues 21–511 (SGVFELKVLS…VNSPALPAAL (491 aa)) are Extracellular-facing. The region spanning 154-198 (VVCDEFYHGEECSDFCRPRNDTFGHFNCDAAGNRICLPGWKGDYC) is the DSL domain. Cystine bridges form between Cys-156–Cys-165, Cys-169–Cys-181, Cys-189–Cys-198, Cys-203–Cys-214, Cys-207–Cys-220, Cys-222–Cys-231, Cys-234–Cys-245, Cys-240–Cys-251, Cys-253–Cys-262, Cys-269–Cys-281, Cys-275–Cys-291, Cys-293–Cys-302, Cys-309–Cys-320, Cys-314–Cys-329, Cys-331–Cys-340, Cys-347–Cys-358, Cys-352–Cys-368, Cys-370–Cys-379, Cys-386–Cys-397, Cys-391–Cys-406, Cys-408–Cys-417, Cys-424–Cys-435, Cys-429–Cys-444, Cys-446–Cys-455, Cys-462–Cys-473, Cys-467–Cys-482, and Cys-484–Cys-493. N-linked (GlcNAc...) asparagine glycosylation is present at Asn-173. 3 consecutive EGF-like domains span residues 199 to 232 (TEPI…PLCD), 233 to 263 (ECTR…LFCN), and 265 to 303 (DLNF…KNCE). One can recognise an EGF-like 4; calcium-binding domain in the interval 305–341 (ETNECDSNPCKNGGSCNDQENDYTCTCPQGFYGKNCE). EGF-like domains lie at 343 to 380 (SAMT…SNCE) and 382 to 418 (KIDR…SRCE). Residues 420 to 456 (NIDDCSSNPCQNAGTCVDGINGYTCTCTLGFSGKDCR) form the EGF-like 7; calcium-binding domain. Positions 458–494 (RSDACSFMPCQNGGTCYTHFSGPVCQCPAGFMGTQCE) constitute an EGF-like 8 domain. Residues 512-532 (IVSFTLGLITLTLVICAAIVV) form a helical membrane-spanning segment. The Cytoplasmic segment spans residues 533–664 (LRQMRQNHKA…IEQRVFATEV (132 aa)).

In terms of processing, ubiquitinated by mib, leading to its endocytosis and subsequent degradation. As to expression, strongly expressed in the early retina, where it precedes other delta proteins. Also expressed in cranial ganglia, in sensory epithelia including ear and lateral line and in scattered epidermal cells. In the mesoderm, expression is visible by 50% epiboly; it is expressed subsequently in the tail bud, in stripes in the presomitic mesoderm and in the posterior half of each somite. Also expressed in notochord, blood vessels and pronephros. In contrast to other delta proteins, it is not expressed in the majority of nascent primary neurons. In somites, it marks the posterior part of each formed somite, while deltaD (dld) marks the anterior part.

It localises to the membrane. Its function is as follows. Acts as a ligand for Notch receptors and is involved in somitogenesis. Can activate Notch receptors. Required in somite segmentation to keep the oscillations of neighboring presomitic mesoderm cells synchronized. This chain is Delta-like protein C (dlc), found in Danio rerio (Zebrafish).